The following is a 283-amino-acid chain: Shikimate dehydrogenase (NADP(+)) (283 aa).

Shikimate-binding positions include 19-21 (SLS) and threonine 66. Lysine 70 acts as the Proton acceptor in catalysis. Residues asparagine 91 and aspartate 106 each coordinate shikimate. Residues 129 to 133 (GAGGA), 153 to 158 (NRTPEK), and leucine 224 each bind NADP(+). Tyrosine 226 is a binding site for shikimate. Glycine 247 contributes to the NADP(+) binding site.

This sequence belongs to the shikimate dehydrogenase family. As to quaternary structure, homodimer.

It catalyses the reaction shikimate + NADP(+) = 3-dehydroshikimate + NADPH + H(+). It participates in metabolic intermediate biosynthesis; chorismate biosynthesis; chorismate from D-erythrose 4-phosphate and phosphoenolpyruvate: step 4/7. Its function is as follows. Involved in the biosynthesis of the chorismate, which leads to the biosynthesis of aromatic amino acids. Catalyzes the reversible NADPH linked reduction of 3-dehydroshikimate (DHSA) to yield shikimate (SA). The protein is Shikimate dehydrogenase (NADP(+)) of Methanothermobacter thermautotrophicus (strain ATCC 29096 / DSM 1053 / JCM 10044 / NBRC 100330 / Delta H) (Methanobacterium thermoautotrophicum).